The chain runs to 126 residues: uncharacterized protein (126 aa).

An HIT domain is found at 19–126 (IFERIIEGAV…LGGGLLGSIA (108 aa)). The short motif at 111–115 (HLHIH) is the Histidine triad motif element.

This is an uncharacterized protein from Chlamydia muridarum (strain MoPn / Nigg).